Reading from the N-terminus, the 361-residue chain is Phenylalanine 4-monooxygenase, chloroplastic (361 aa).

The transit peptide at 1 to 55 (MLALRQGALLLSARGGQTTHDNLQLCAGPSRRPRARWISSAPRPSTLVERHIRPQ) directs the protein to the chloroplast. The disordered stretch occupies residues 47–67 (LVERHIRPQASTASDATTSTS). Residues 56–67 (ASTASDATTSTS) show a composition bias toward low complexity. Fe cation contacts are provided by His227, His232, and Glu272.

The protein belongs to the biopterin-dependent aromatic amino acid hydroxylase family. Fe(2+) is required as a cofactor.

It localises to the plastid. The protein localises to the chloroplast. It carries out the reaction (6R)-L-erythro-5,6,7,8-tetrahydrobiopterin + L-phenylalanine + O2 = (4aS,6R)-4a-hydroxy-L-erythro-5,6,7,8-tetrahydrobiopterin + L-tyrosine. Functionally, catalyzes the hydroxylation of L-phenylalanine to L-tyrosine. Can functionally complement an Escherichia coli tyrosine auxotroph. This chain is Phenylalanine 4-monooxygenase, chloroplastic, found in Chlamydomonas reinhardtii (Chlamydomonas smithii).